The primary structure comprises 402 residues: Zinc finger CCHC domain-containing protein 12 (402 aa).

The disordered stretch occupies residues 308-341 (IDSPHNSRAQFPSTSGGSGYKNNGPGEMRRARKR). Over residues 311–322 (PHNSRAQFPSTS) the composition is skewed to polar residues. The segment at 345–362 (IRCSYCGEEGHSKETCDN) adopts a CCHC-type zinc-finger fold.

Belongs to the ZCCHC12 family. In terms of assembly, interacts with SMAD1 and CREB-binding protein (CBP). Forms a protein-DNA complex through its association with SMAD1.

In terms of biological role, transcriptional coactivator in the bone morphogenetic protein (BMP)-signaling pathway. It positively modulates BMP signaling by interacting with SMAD1 and associating with CBP in the transcription complex. It contributes to the BMP-induced enhancement of cholinergic-neuron-specific gene expression. This is Zinc finger CCHC domain-containing protein 12 (ZCCHC12) from Homo sapiens (Human).